The sequence spans 620 residues: Glutathione-regulated potassium-efflux system protein KefC (620 aa).

Helical transmembrane passes span histidine 4–valine 24, leucine 26–leucine 46, serine 54–leucine 74, glycine 90–leucine 110, valine 114–methionine 134, phenylalanine 149–leucine 169, methionine 178–leucine 198, valine 218–glycine 238, glycine 270–isoleucine 290, leucine 294–isoleucine 314, tryptophan 327–glutamine 347, and serine 359–asparagine 379. The RCK N-terminal domain maps to glutamine 399 to threonine 518. The tract at residues glycine 597–serine 620 is disordered.

Belongs to the monovalent cation:proton antiporter 2 (CPA2) transporter (TC 2.A.37) family. KefC subfamily. As to quaternary structure, homodimer. Interacts with the regulatory subunit KefF.

The protein localises to the cell inner membrane. In terms of biological role, pore-forming subunit of a potassium efflux system that confers protection against electrophiles. Catalyzes K(+)/H(+) antiport. The chain is Glutathione-regulated potassium-efflux system protein KefC from Escherichia coli O45:K1 (strain S88 / ExPEC).